We begin with the raw amino-acid sequence, 424 residues long: Inhibin beta A chain (424 aa).

A signal peptide spans 1–20 (MPLLWLRGFLLASCWIIVRS). Positions 21–308 (SPTPGSGGHS…EEHPHRRRRR (288 aa)) are excised as a propeptide. A glycan (N-linked (GlcNAc...) asparagine) is linked at asparagine 165. Disordered regions lie at residues 178–197 (QQRRPQGSADAGEEAEDVGF) and 259–306 (KKKK…HRRR). Residues 188–197 (AGEEAEDVGF) show a composition bias toward acidic residues. Residues 263–275 (KEEEAEGRKRDGE) are compositionally biased toward basic and acidic residues. 4 disulfide bridges follow: cysteine 312-cysteine 320, cysteine 319-cysteine 389, cysteine 348-cysteine 421, and cysteine 352-cysteine 423.

This sequence belongs to the TGF-beta family. As to quaternary structure, dimeric, linked by one or more disulfide bonds. Inhibin A is a dimer of alpha/INHA and beta-A/INHBA. Activin A is a homodimer of beta-A/INHBA. Activin AB is a dimer of beta-A/INHBA and beta-B/INHBB. Interacts with FST and FSTL3; these interactions prevent activin A interaction to its type II receptor. Activin A interacts with ACVR2A. Activin A interacts with BMPR2. Inhibin A interacts with ACVR1; this interaction creates a non-signaling complex (NSC) that inhibits ACVR1-mediated BMP signaling. Inhibin A interacts with ACVR2A.

It localises to the secreted. Its function is as follows. Inhibins/activins are involved in regulating a number of diverse functions such as hypothalamic and pituitary hormone secretion, gonadal hormone secretion, germ cell development and maturation, erythroid differentiation, insulin secretion, nerve cell survival, embryonic axial development or bone growth, depending on their subunit composition. Functionally, activin A is a homodimer of INHBA that plays a role in several essential biological processes including embryonic development, stem cell maintenance and differentiation, haematopoiesis, cell proliferation and tissue fibrosis. Signals through type I (such as ACVR1B or ACVR1C) and type II receptors (such as ACVR2A, ACVR2B or BMPR2) which, upon ligand binding, phosphorylate SMAD2 and SMAD3 intracellular signaling mediators that form a complex with SMAD4, translocate to the nucleus and modulate gene expression. Can also activate alternative non-canonical intracellular signaling pathways including the p38 MAPK, extracellular signal-regulated kinases 1/2 (ERK1/2) and c-Jun N-terminal kinases (JNKs) to modulate cell migration and differentiation. Alternatively, promotes osteoblastic differentiation via ACVRL1-SMAD1/5/9 pathway. In addition, can engage the type I receptor ACVR1 to form an ACVR1-activin A-type II receptor non-signaling complex (NSC) that renders receptors unavailable for engagement with BMPs, hence resulting in an apparent inhibition of ACVR1-mediated BMP signaling. In terms of biological role, inhibin A is a dimer of alpha/INHA and beta-A/INHBA that functions as a feedback regulator in the hypothalamic-pituitary-gonadal (HPG) axis. Inhibits the secretion of FSH from the anterior pituitary gland by acting on pituitary gonadotrope cells. Antagonizes activin A by binding to the proteoglycan, betaglycan, and forming a stable complex with and, thereby, sequestering type II activin receptors while excluding type I receptor. The chain is Inhibin beta A chain (INHBA) from Sus scrofa (Pig).